Consider the following 365-residue polypeptide: Pheromone M-factor receptor (365 aa).

7 consecutive transmembrane segments (helical) span residues 7–24 (FYQFYAYFALVLSIPILY), 31–54 (NIPCLLLLFWLTLTTLIYVVESAI), 73–100 (ITSRIVTCSSIGIPASAFTLVLYLDTVI), 116–133 (VCLSILLPLIIMAMMVPL), 155–182 (YTLLFFYIPPCLLSFGGLFFVSRIVVLY), 204–226 (FLRLLCLAAVFFLGYFPLTIFMV), and 265–283 (VPPTVLYLMSLFFSTSGGW).

The protein belongs to the G-protein coupled receptor 4 family.

Its subcellular location is the membrane. Functionally, receptor for the peptide pheromone M-factor, a mating factor of S.pombe. Pheromone signaling is essential for initiation of meiosis in S.pombe; M-factor signaling alone may be sufficient. This Schizosaccharomyces pombe (strain 972 / ATCC 24843) (Fission yeast) protein is Pheromone M-factor receptor (map3).